Here is a 276-residue protein sequence, read N- to C-terminus: Pantothenate synthetase (276 aa).

An ATP-binding site is contributed by 27–34 (MGNLHDGH). The Proton donor role is filled by His-34. Gln-58 contributes to the (R)-pantoate binding site. Position 58 (Gln-58) interacts with beta-alanine. 145-148 (GKKD) contributes to the ATP binding site. A (R)-pantoate-binding site is contributed by Gln-151. ATP is bound by residues Ile-174 and 182–185 (LSSR).

The protein belongs to the pantothenate synthetase family. Homodimer.

The protein localises to the cytoplasm. It catalyses the reaction (R)-pantoate + beta-alanine + ATP = (R)-pantothenate + AMP + diphosphate + H(+). It participates in cofactor biosynthesis; (R)-pantothenate biosynthesis; (R)-pantothenate from (R)-pantoate and beta-alanine: step 1/1. Catalyzes the condensation of pantoate with beta-alanine in an ATP-dependent reaction via a pantoyl-adenylate intermediate. In Aromatoleum aromaticum (strain DSM 19018 / LMG 30748 / EbN1) (Azoarcus sp. (strain EbN1)), this protein is Pantothenate synthetase.